We begin with the raw amino-acid sequence, 226 residues long: NADH-ubiquinone oxidoreductase chain 6 (226 aa).

6 consecutive transmembrane segments (helical) span residues 1 to 21 (MNNF…ILVI), 27 to 47 (VISV…LVLL), 52 to 72 (IGIS…LFVI), 94 to 114 (PLAT…VPSF), 126 to 146 (IFKF…LGVG), and 185 to 205 (ALWL…PITL).

The protein belongs to the complex I subunit 6 family.

It is found in the mitochondrion inner membrane. It carries out the reaction a ubiquinone + NADH + 5 H(+)(in) = a ubiquinol + NAD(+) + 4 H(+)(out). Functionally, core subunit of the mitochondrial membrane respiratory chain NADH dehydrogenase (Complex I) that is believed to belong to the minimal assembly required for catalysis. Complex I functions in the transfer of electrons from NADH to the respiratory chain. The immediate electron acceptor for the enzyme is believed to be ubiquinone. In Mycosarcoma maydis (Corn smut fungus), this protein is NADH-ubiquinone oxidoreductase chain 6 (ND6).